The sequence spans 393 residues: S-adenosylmethionine synthase (393 aa).

H16 contacts ATP. Mg(2+) is bound at residue D18. E44 provides a ligand contact to K(+). L-methionine is bound by residues E57 and Q100. Positions Q100–H110 are flexible loop. ATP contacts are provided by residues D167–K169, R238–F239, D247, R253–K254, A270, and K274. Position 247 (D247) interacts with L-methionine. K278 is an L-methionine binding site.

Belongs to the AdoMet synthase family. In terms of assembly, homotetramer; dimer of dimers. Mg(2+) is required as a cofactor. It depends on K(+) as a cofactor.

Its subcellular location is the cytoplasm. The catalysed reaction is L-methionine + ATP + H2O = S-adenosyl-L-methionine + phosphate + diphosphate. It functions in the pathway amino-acid biosynthesis; S-adenosyl-L-methionine biosynthesis; S-adenosyl-L-methionine from L-methionine: step 1/1. Its function is as follows. Catalyzes the formation of S-adenosylmethionine (AdoMet) from methionine and ATP. The overall synthetic reaction is composed of two sequential steps, AdoMet formation and the subsequent tripolyphosphate hydrolysis which occurs prior to release of AdoMet from the enzyme. The polypeptide is S-adenosylmethionine synthase (Paracidovorax citrulli (strain AAC00-1) (Acidovorax citrulli)).